The primary structure comprises 91 residues: Small ribosomal subunit protein uS19 (91 aa).

The protein belongs to the universal ribosomal protein uS19 family.

Protein S19 forms a complex with S13 that binds strongly to the 16S ribosomal RNA. This chain is Small ribosomal subunit protein uS19, found in Desulfotalea psychrophila (strain LSv54 / DSM 12343).